Reading from the N-terminus, the 172-residue chain is Adenine phosphoribosyltransferase (172 aa).

This sequence belongs to the purine/pyrimidine phosphoribosyltransferase family. As to quaternary structure, homodimer.

Its subcellular location is the cytoplasm. The enzyme catalyses AMP + diphosphate = 5-phospho-alpha-D-ribose 1-diphosphate + adenine. Its pathway is purine metabolism; AMP biosynthesis via salvage pathway; AMP from adenine: step 1/1. Catalyzes a salvage reaction resulting in the formation of AMP, that is energically less costly than de novo synthesis. This Anaeromyxobacter dehalogenans (strain 2CP-1 / ATCC BAA-258) protein is Adenine phosphoribosyltransferase.